A 352-amino-acid chain; its full sequence is UDP-N-acetylglucosamine--N-acetylmuramyl-(pentapeptide) pyrophosphoryl-undecaprenol N-acetylglucosamine transferase (352 aa).

Ser-195 and Gln-287 together coordinate UDP-N-acetyl-alpha-D-glucosamine.

Belongs to the glycosyltransferase 28 family. MurG subfamily.

The protein resides in the cell membrane. The catalysed reaction is Mur2Ac(oyl-L-Ala-gamma-D-Glu-L-Lys-D-Ala-D-Ala)-di-trans,octa-cis-undecaprenyl diphosphate + UDP-N-acetyl-alpha-D-glucosamine = beta-D-GlcNAc-(1-&gt;4)-Mur2Ac(oyl-L-Ala-gamma-D-Glu-L-Lys-D-Ala-D-Ala)-di-trans,octa-cis-undecaprenyl diphosphate + UDP + H(+). It participates in cell wall biogenesis; peptidoglycan biosynthesis. Its function is as follows. Cell wall formation. Catalyzes the transfer of a GlcNAc subunit on undecaprenyl-pyrophosphoryl-MurNAc-pentapeptide (lipid intermediate I) to form undecaprenyl-pyrophosphoryl-MurNAc-(pentapeptide)GlcNAc (lipid intermediate II). The sequence is that of UDP-N-acetylglucosamine--N-acetylmuramyl-(pentapeptide) pyrophosphoryl-undecaprenol N-acetylglucosamine transferase from Streptococcus pneumoniae (strain 70585).